We begin with the raw amino-acid sequence, 292 residues long: Ribosomal protein L11 methyltransferase (292 aa).

Residues Thr-144, Gly-165, Asp-187, and Asn-229 each contribute to the S-adenosyl-L-methionine site.

Belongs to the methyltransferase superfamily. PrmA family.

It is found in the cytoplasm. The enzyme catalyses L-lysyl-[protein] + 3 S-adenosyl-L-methionine = N(6),N(6),N(6)-trimethyl-L-lysyl-[protein] + 3 S-adenosyl-L-homocysteine + 3 H(+). Methylates ribosomal protein L11. This chain is Ribosomal protein L11 methyltransferase, found in Pseudomonas fluorescens (strain Pf0-1).